A 638-amino-acid polypeptide reads, in one-letter code: Fructose-1,6-bisphosphatase class 3 (638 aa).

Belongs to the FBPase class 3 family. It depends on Mn(2+) as a cofactor.

The enzyme catalyses beta-D-fructose 1,6-bisphosphate + H2O = beta-D-fructose 6-phosphate + phosphate. It participates in carbohydrate biosynthesis; gluconeogenesis. This Pediococcus pentosaceus (strain ATCC 25745 / CCUG 21536 / LMG 10740 / 183-1w) protein is Fructose-1,6-bisphosphatase class 3.